We begin with the raw amino-acid sequence, 224 residues long: Ribose-5-phosphate isomerase A (224 aa).

Substrate-binding positions include 26–29 (TGST), 81–84 (DGAD), and 94–97 (KGGG). The Proton acceptor role is filled by Glu103. Lys121 is a substrate binding site.

It belongs to the ribose 5-phosphate isomerase family. As to quaternary structure, homodimer.

The catalysed reaction is aldehydo-D-ribose 5-phosphate = D-ribulose 5-phosphate. Its pathway is carbohydrate degradation; pentose phosphate pathway; D-ribose 5-phosphate from D-ribulose 5-phosphate (non-oxidative stage): step 1/1. Catalyzes the reversible conversion of ribose-5-phosphate to ribulose 5-phosphate. The sequence is that of Ribose-5-phosphate isomerase A from Listeria monocytogenes serotype 4b (strain F2365).